Reading from the N-terminus, the 246-residue chain is 2,5-diamino-6-ribosylamino-4(3H)-pyrimidinone 5'-phosphate reductase (246 aa).

NADP(+) contacts are provided by residues T78, D82, L163, and 186 to 190 (GAEVL).

Belongs to the HTP reductase family. In terms of assembly, homodimer.

The enzyme catalyses 2,5-diamino-6-(1-D-ribitylamino)pyrimidin-4(3H)-one 5'-phosphate + NADP(+) = 2,5-diamino-6-(1-D-ribosylamino)pyrimidin-4(3H)-one 5'-phosphate + NADPH + H(+). It carries out the reaction 2,5-diamino-6-(1-D-ribitylamino)pyrimidin-4(3H)-one 5'-phosphate + NAD(+) = 2,5-diamino-6-(1-D-ribosylamino)pyrimidin-4(3H)-one 5'-phosphate + NADH + H(+). The protein operates within cofactor biosynthesis; riboflavin biosynthesis. Catalyzes an early step in riboflavin biosynthesis, the NADPH-dependent reduction of the ribose side chain of 2,5-diamino-6-ribosylamino-4(3H)-pyrimidinone 5'-phosphate, yielding 2,5-diamino-6-ribitylamino-4(3H)-pyrimidinone 5'-phosphate. This is 2,5-diamino-6-ribosylamino-4(3H)-pyrimidinone 5'-phosphate reductase (RIB7) from Eremothecium gossypii (strain ATCC 10895 / CBS 109.51 / FGSC 9923 / NRRL Y-1056) (Yeast).